The sequence spans 1141 residues: cGMP-inhibited 3',5'-cyclic phosphodiesterase 3A (1141 aa).

Residues 1–42 (MAVPGDAARVRDKPVHSGVSQAPTAGRDCHHRADPASPRDSG) form a disordered region. Transmembrane regions (helical) follow at residues 61–81 (LSSALCAGSLSFLLALLVRLV), 130–150 (LQPSALLFSLLCAFFWMGLYL), 160–180 (AVALLAACCGGEALVQIGLGV), 185–205 (LLSLPAAGVVLSCLAAATWLV), 210–230 (LGVLMIALTSAVRTVSLISLE), and 232–252 (FKVAWRPYLAYLAGVLGILLA). Residue Ser-312 is modified to Phosphoserine. Phosphoserine; by PKA and PKC is present on residues Ser-428 and Ser-438. Residues 436 to 448 (RVSSTWTTTTSAT) show a composition bias toward low complexity. The segment at 436–482 (RVSSTWTTTTSATGLPTLEPAPVRRDRSTSIKLQEAPSSSPDSWNNP) is disordered. A compositionally biased stretch (polar residues) spans 465–482 (SIKLQEAPSSSPDSWNNP). A phosphoserine mark is found at Ser-492, Ser-520, and Ser-524. The tract at residues 590 to 640 (RPYSQGNPADEPLERSGVATRTPSRTDDTAQVTSDYETNNNSDSSDIVQNE) is disordered. Residues 608–637 (ATRTPSRTDDTAQVTSDYETNNNSDSSDIV) show a composition bias toward polar residues. The segment at 669–1141 (KPILAPEPLV…EEIPTQKPDQ (473 aa)) is interaction with SLFN12. The PDEase domain maps to 674–1093 (PEPLVMDNLD…KMWKKVIEEE (420 aa)). His-752 acts as the Proton donor in catalysis. His-752 contributes to the AMP binding site. His-756, His-836, Asp-837, and Asp-950 together coordinate Mn(2+). 3 residues coordinate AMP: Asp-837, Asp-950, and Gln-1001. Asp-837 serves as a coordination point for Mg(2+). Disordered regions lie at residues 1023 to 1062 (PGKWVEDSDESGDTDDPEEEEEEAPAPNEEETCENNESPK) and 1100 to 1141 (ENQS…KPDQ). Positions 1029 to 1056 (DSDESGDTDDPEEEEEEAPAPNEEETCE) are enriched in acidic residues. Ser-1033 bears the Phosphoserine mark. Residue Thr-1036 is modified to Phosphothreonine. Positions 1100–1113 (ENQSLDQTPQSHSS) are enriched in polar residues. A Glycyl lysine isopeptide (Lys-Gly) (interchain with G-Cter in SUMO2) cross-link involves residue Lys-1120. Basic and acidic residues predominate over residues 1125 to 1141 (EKGKPRGEEIPTQKPDQ).

It belongs to the cyclic nucleotide phosphodiesterase family. PDE3 subfamily. In terms of assembly, homodimer. Interacts with SLFN12; direct low affinity interaction which is stimulated by binding of 17beta-estradiol/E2 to PDE3A and that positively regulates the ribonuclease activity of SLFN12. Mn(2+) is required as a cofactor. The cofactor is Mg(2+).

The protein localises to the membrane. It localises to the cytoplasm. Its subcellular location is the cytosol. The enzyme catalyses a nucleoside 3',5'-cyclic phosphate + H2O = a nucleoside 5'-phosphate + H(+). The catalysed reaction is 3',5'-cyclic AMP + H2O = AMP + H(+). It catalyses the reaction 3',5'-cyclic GMP + H2O = GMP + H(+). It carries out the reaction 3',5'-cyclic UMP + H2O = UMP + H(+). Its activity is regulated as follows. Inhibited by cGMP. Inhibited by 17beta-estradiol. Inhibited by milrinone. Functionally, cyclic nucleotide phosphodiesterase with specificity for the second messengers cAMP and cGMP, which are key regulators of many important physiological processes. Also has activity toward cUMP. Independently of its catalytic activity it is part of an E2/17beta-estradiol-induced pro-apoptotic signaling pathway. E2 stabilizes the PDE3A/SLFN12 complex in the cytosol, promoting the dephosphorylation of SLFN12 and activating its pro-apoptotic ribosomal RNA/rRNA ribonuclease activity. This apoptotic pathway might be relevant in tissues with high concentration of E2 and be for instance involved in placenta remodeling. The polypeptide is cGMP-inhibited 3',5'-cyclic phosphodiesterase 3A (Homo sapiens (Human)).